Here is a 346-residue protein sequence, read N- to C-terminus: NADH-quinone oxidoreductase subunit H (346 aa).

Transmembrane regions (helical) follow at residues 6 to 26 (ILFWLLKSGLFFFILITACAY), 76 to 96 (VMYLIAPAISMTCAIMAWSVV), 128 to 148 (ILFLFAISSLAVYGIIIAGWA), 166 to 186 (ISYELPLGMSVVSIVILSGSL), 198 to 218 (LWNIFKLPGFIAFCLFVVAMF), 260 to 280 (ITMSCVVTLLFFGGYQVPFGI), 289 to 309 (LFGLVFFLGKVLFFTFLFLWV), and 324 to 344 (LGWKKLIPWAILNILIASIYI).

It belongs to the complex I subunit 1 family. In terms of assembly, NDH-1 is composed of 14 different subunits. Subunits NuoA, H, J, K, L, M, N constitute the membrane sector of the complex.

The protein resides in the cell inner membrane. The enzyme catalyses a quinone + NADH + 5 H(+)(in) = a quinol + NAD(+) + 4 H(+)(out). Functionally, NDH-1 shuttles electrons from NADH, via FMN and iron-sulfur (Fe-S) centers, to quinones in the respiratory chain. The immediate electron acceptor for the enzyme in this species is believed to be ubiquinone. Couples the redox reaction to proton translocation (for every two electrons transferred, four hydrogen ions are translocated across the cytoplasmic membrane), and thus conserves the redox energy in a proton gradient. This subunit may bind ubiquinone. The sequence is that of NADH-quinone oxidoreductase subunit H from Leptospira interrogans serogroup Icterohaemorrhagiae serovar copenhageni (strain Fiocruz L1-130).